Here is a 114-residue protein sequence, read N- to C-terminus: Small ribosomal subunit protein bS6 (114 aa).

Belongs to the bacterial ribosomal protein bS6 family.

Its function is as follows. Binds together with bS18 to 16S ribosomal RNA. This Hydrogenovibrio crunogenus (strain DSM 25203 / XCL-2) (Thiomicrospira crunogena) protein is Small ribosomal subunit protein bS6.